The primary structure comprises 1244 residues: MNSVFYNPFGRGAYAQPPIAWRPRRRAAPAPRPSGLTTQIQQLTRAVRALVLDNATRRQRPAPRTRPRKPKTQKPKPKKQNQKPPQQQKKGKNQPQQPKKPKPGKRQRTALKFEADRTFVGKNEDGKIMGYAVAMEGKVIKPLHVKGTIDHPALAKLKFTKSSSYDMEFAKLPTEMKSDAFGYTTEHPEVFYNWHHGAVQFSGGRFTIPTGVGGPGDSGRPILDNSGKVVAIVLGGANEVPGTALSVVTWNKKGAAIKTTHEDTVEWSRAITAMCILQNVTFPCDRPPTCYNRNPDLTLTMLETNVNHPSYDVLLDAALRCPTRRHVRSTPTDDFTLTAPYLGLCHRCKTMEPCYSPIKIEKVWDDADDGVLRIQVSAQLGYNRAGTAASARLRFMGGGVPPEIQEGAIADFKVFTSKPCLHLSHKGYFVIVKCPPGDSITTSLKVHGSDQTCTIPMRVGYKFVGREKYTLPPMHGTQIPCLTYERTREKSAGYVTMHRPGQQSITMLMEESGGEVYVQPTSGRNVTYECKCGDFKTGTVTARTKIDGCTERKQCIAISADHVKWVFNSPDLIRHTDHTAQGKLHIPFPLQQAQCTVPLAHLPGVKHAYRSMSLTLHAEHPTLLTTRHLGENPQPTAEWIVGSVTRNFSITIQGFEYTWGNQKPVRVYAQESAPGNPHGWPHEIVRHYYHLYPFYTVTVLSGMGLAICAGLVISILCCCKARRDCLTPYQLAPNATVPFLVTLCCCFQRTSADEFTDTMGYLWQHSQTMFWIQLVIPLAAVITLVRCCSCCLPFLLVASPPNKADAYEHTITVPNAPLNSYKALVERPGYAPLNLEVMVMNTQIIPSVKREYITCRYHTVVPSPQIKCCGTVECPKGEKADYTCKVFTGVYPFLWGGAQCFCDSENSQLSDKYVELSTDCATDHAEAVRVHTASVKSQLRITYGNSTAQVDVFVNGVTPARSKDMKLIAGPLSTTFSPFDNKVIIYHGKVYNYDFPEFGAGTPGAFGDVQASSTTGSDLLANTAIHLQRPEARNIHVPYTQAPSGFEFWKNNSGQPLSDTAPFGCKVNVNPLRADKCAVGSLPISVDIPDAAFTRVSEPLPSLLKCTVTSCTYSTDYGGVLVLTYESDRAGQCAVHSHSSTAVLRDPSVYVEQKGETTLKFSTRSLQADFEVSMCGTRTTCHAQCQPPTEHVMNRPQKSTPDFSSAISKTSWNWITALMGGISSIAAIAAIVLVIALVFTAQHR.

A disordered region spans residues 1-113; it reads MNSVFYNPFG…GKRQRTALKF (113 aa). Positions 35 to 44 are enriched in polar residues; the sequence is GLTTQIQQLT. The interval 35-69 is host transcription inhibition; it reads GLTTQIQQLTRAVRALVLDNATRRQRPAPRTRPRK. Basic residues predominate over residues 57–81; the sequence is RRQRPAPRTRPRKPKTQKPKPKKQN. The Nuclear localization signal signature appears at 62 to 103; sequence APRTRPRKPKTQKPKPKKQNQKPPQQQKKGKNQPQQPKKPKP. Over residues 82 to 97 the composition is skewed to low complexity; that stretch reads QKPPQQQKKGKNQPQQ. The tract at residues 85-118 is binding to the viral RNA; that stretch reads PQQQKKGKNQPQQPKKPKPGKRQRTALKFEADRT. Over residues 99–109 the composition is skewed to basic residues; that stretch reads KKPKPGKRQRT. The interval 103 to 117 is ribosome-binding; sequence PGKRQRTALKFEADR. Positions 117-267 constitute a Peptidase S3 domain; the sequence is RTFVGKNEDG…KTTHEDTVEW (151 aa). Residue His144 is the Charge relay system of the active site. Positions 149 to 159 match the Nuclear export signal motif; it reads IDHPALAKLKF. The interaction with spike glycoprotein E2 stretch occupies residues 160–165; sequence TKSSSY. Asp166 acts as the Charge relay system in catalysis. A dimerization of the capsid protein region spans residues 188–198; the sequence is PEVFYNWHHGA. The active-site Charge relay system is the Ser218. A dimerization of the capsid protein region spans residues 224-228; that stretch reads DNSGK. The interval 252–256 is interaction with spike glycoprotein E2; that stretch reads KKGAA. Residues 268 to 280 are functions as an uncleaved signal peptide for the precursor of protein E3/E2; sequence SRAITAMCILQNV. Over 268–696 the chain is Extracellular; it reads SRAITAMCIL…HYYHLYPFYT (429 aa). A glycan (N-linked (GlcNAc...) asparagine; by host) is linked at Asn279. Cystine bridges form between Cys284-Cys290, Cys481-Cys595, Cys530-Cys555, and Cys532-Cys549. Asn525 carries an N-linked (GlcNAc...) asparagine; by host glycan. A glycan (N-linked (GlcNAc...) asparagine; by host) is linked at Asn647. A helical transmembrane segment spans residues 697–717; the sequence is VTVLSGMGLAICAGLVISILC. Residues 718-751 are Cytoplasmic-facing; that stretch reads CCKARRDCLTPYQLAPNATVPFLVTLCCCFQRTS. The interval 720 to 724 is interaction with the capsid protein; sequence KARRD. 3 S-palmitoyl cysteine; by host lipidation sites follow: Cys725, Cys745, and Cys746. A disulfide bridge links Cys725 with Cys746. The Extracellular portion of the chain corresponds to 752–764; it reads ADEFTDTMGYLWQ. Transmembrane regions (helical) follow at residues 765 to 785 and 786 to 805; these read HSQT…ITLV and RCCS…NKAD. At 806-1218 the chain is on the extracellular side; the sequence is AYEHTITVPN…KTSWNWITAL (413 aa). Disulfide bonds link Cys855/Cys920, Cys868/Cys900, Cys869/Cys902, and Cys874/Cys884. The E1 fusion peptide loop stretch occupies residues 890 to 907; sequence VYPFLWGGAQCFCDSENS. Asn945 and Asn1051 each carry an N-linked (GlcNAc...) asparagine; by host glycan. 4 cysteine pairs are disulfide-bonded: Cys1065/Cys1077, Cys1106/Cys1181, Cys1111/Cys1185, and Cys1133/Cys1175. A helical membrane pass occupies residues 1219-1239; sequence MGGISSIAAIAAIVLVIALVF. Residues 1240–1244 lie on the Cytoplasmic side of the membrane; sequence TAQHR.

In terms of assembly, homodimer. Homomultimer. Interacts with host karyopherin KPNA4; this interaction allows the nuclear import of the viral capsid protein. Interacts with spike glycoprotein E2. Interacts with host IRAK1; the interaction leads to inhibition of IRAK1-dependent signaling. As to quaternary structure, the precursor of protein E3/E2 and E1 form a heterodimer shortly after synthesis. The precursor of protein E3/E2 and E1 form a heterodimer shortly after synthesis. Processing of the precursor of protein E3/E2 into E2 and E3 results in a heterodimer of the spike glycoproteins E2 and E1. Spike at virion surface are constituted of a trimer of E2-E1 heterodimers. After target cell attachment and endocytosis, E1 change conformation to form homotrimers. Interacts with 6K protein. In terms of assembly, interacts with spike glycoprotein E1. Processing of the precursor of protein E3/E2 into E2 and E3 results in a heterodimer of the spike glycoproteins E2 and E1. Spike at virion surface are constituted of a trimer of E2-E1 heterodimers. Interacts with 6K protein. As to quaternary structure, oligomer. Interacts with spike glycoprotein E1. Interacts with spike glycoprotein E2. In terms of processing, structural polyprotein: Specific enzymatic cleavages in vivo yield mature proteins. Capsid protein is auto-cleaved during polyprotein translation, unmasking a signal peptide at the N-terminus of the precursor of E3/E2. The remaining polyprotein is then targeted to the host endoplasmic reticulum, where host signal peptidase cleaves it into pE2, 6K and E1 proteins. pE2 is further processed to mature E3 and E2 by host furin in trans-Golgi vesicle. Palmitoylated via thioester bonds. These palmitoylations may induce disruption of the C-terminus transmembrane. This would result in the reorientation of E2 C-terminus from lumenal to cytoplasmic side. Post-translationally, N-glycosylated. In terms of processing, palmitoylated via thioester bonds.

Its subcellular location is the virion. It is found in the host cytoplasm. It localises to the host cell membrane. The protein resides in the host nucleus. The protein localises to the virion membrane. Its subcellular location is the host Golgi apparatus. It is found in the host trans-Golgi network. It localises to the host endoplasmic reticulum. It catalyses the reaction Autocatalytic release of the core protein from the N-terminus of the togavirus structural polyprotein by hydrolysis of a -Trp-|-Ser- bond.. Forms an icosahedral capsid with a T=4 symmetry composed of 240 copies of the capsid protein surrounded by a lipid membrane through which penetrate 80 spikes composed of trimers of E1-E2 heterodimers. The capsid protein binds to the viral RNA genome at a site adjacent to a ribosome binding site for viral genome translation following genome release. Possesses a protease activity that results in its autocatalytic cleavage from the nascent structural protein. Following its self-cleavage, the capsid protein transiently associates with ribosomes, and within several minutes the protein binds to viral RNA and rapidly assembles into icosahedric core particles. The resulting nucleocapsid eventually associates with the cytoplasmic domain of the spike glycoprotein E2 at the cell membrane, leading to budding and formation of mature virions. In case of infection, new virions attach to target cells and after clathrin-mediated endocytosis their membrane fuses with the host endosomal membrane. This leads to the release of the nucleocapsid into the cytoplasm, followed by an uncoating event necessary for the genomic RNA to become accessible. The uncoating might be triggered by the interaction of capsid proteins with ribosomes. Binding of ribosomes would release the genomic RNA since the same region is genomic RNA-binding and ribosome-binding. Specifically inhibits interleukin-1 receptor-associated kinase 1/IRAK1-dependent signaling during viral entry, representing a means by which the alphaviruses may evade innate immune detection and activation prior to viral gene expression. Functionally, provides the signal sequence for the translocation of the precursor of protein E3/E2 to the host endoplasmic reticulum. Furin-cleaved E3 remains associated with spike glycoprotein E1 and mediates pH protection of the latter during the transport via the secretory pathway. After virion release from the host cell, the assembly protein E3 is gradually released in the extracellular space. Its function is as follows. Plays a role in viral attachment to target host cell, by binding to the cell receptor. Synthesized as a p62 precursor which is processed by furin at the cell membrane just before virion budding, giving rise to E2-E1 heterodimer. The p62-E1 heterodimer is stable, whereas E2-E1 is unstable and dissociate at low pH. p62 is processed at the last step, presumably to avoid E1 fusion activation before its final export to cell surface. E2 C-terminus contains a transitory transmembrane that would be disrupted by palmitoylation, resulting in reorientation of the C-terminal tail from lumenal to cytoplasmic side. This step is critical since E2 C-terminus is involved in budding by interacting with capsid proteins. This release of E2 C-terminus in cytoplasm occurs lately in protein export, and precludes premature assembly of particles at the endoplasmic reticulum membrane. In terms of biological role, acts as a viroporin that participates in virus glycoprotein processing and transport to the plasma membrane, cell permeabilization and budding of viral particles. Disrupts the calcium homeostasis of the cell, probably at the endoplasmic reticulum level. This leads to cytoplasmic calcium elevation. Because of its lipophilic properties, the 6K protein is postulated to influence the selection of lipids that interact with the transmembrane domains of the glycoproteins, which, in turn, affects the deformability of the bilayer required for the extreme curvature that occurs as budding proceeds. Present in low amount in virions, about 3% compared to viral glycoproteins. Class II viral fusion protein. Fusion activity is inactive as long as E1 is bound to E2 in mature virion. After virus attachment to target cell and endocytosis, acidification of the endosome induce dissociation of E1/E2 heterodimer and concomitant trimerization of the E1 subunits. This E1 trimer is fusion active, and promotes release of viral nucleocapsid in cytoplasm after endosome and viral membrane fusion. Efficient fusion requires the presence of cholesterol and sphingolipid in the target membrane. The sequence is that of Structural polyprotein from Aedes (AURAV).